Consider the following 215-residue polypeptide: NADH-quinone oxidoreductase subunit C (215 aa).

This sequence belongs to the complex I 30 kDa subunit family. NDH-1 is composed of 14 different subunits. Subunits NuoB, C, D, E, F, and G constitute the peripheral sector of the complex.

It is found in the cell inner membrane. It catalyses the reaction a quinone + NADH + 5 H(+)(in) = a quinol + NAD(+) + 4 H(+)(out). NDH-1 shuttles electrons from NADH, via FMN and iron-sulfur (Fe-S) centers, to quinones in the respiratory chain. The immediate electron acceptor for the enzyme in this species is believed to be ubiquinone. Couples the redox reaction to proton translocation (for every two electrons transferred, four hydrogen ions are translocated across the cytoplasmic membrane), and thus conserves the redox energy in a proton gradient. In Methylobacterium radiotolerans (strain ATCC 27329 / DSM 1819 / JCM 2831 / NBRC 15690 / NCIMB 10815 / 0-1), this protein is NADH-quinone oxidoreductase subunit C.